We begin with the raw amino-acid sequence, 244 residues long: Lipoprotein-releasing system ATP-binding protein LolD (244 aa).

The ABC transporter domain occupies 19-244 (IRAEALAKTY…KLRELAPSAV (226 aa)). Residue 55–62 (GASGAGKS) participates in ATP binding.

The protein belongs to the ABC transporter superfamily. Lipoprotein translocase (TC 3.A.1.125) family. In terms of assembly, the complex is composed of two ATP-binding proteins (LolD) and two transmembrane proteins (LolC and LolE).

The protein localises to the cell inner membrane. Part of the ABC transporter complex LolCDE involved in the translocation of mature outer membrane-directed lipoproteins, from the inner membrane to the periplasmic chaperone, LolA. Responsible for the formation of the LolA-lipoprotein complex in an ATP-dependent manner. This is Lipoprotein-releasing system ATP-binding protein LolD from Xanthomonas oryzae pv. oryzae (strain MAFF 311018).